We begin with the raw amino-acid sequence, 382 residues long: ATP phosphoribosyltransferase regulatory subunit (382 aa).

The protein belongs to the class-II aminoacyl-tRNA synthetase family. HisZ subfamily. Heteromultimer composed of HisG and HisZ subunits.

It is found in the cytoplasm. The protein operates within amino-acid biosynthesis; L-histidine biosynthesis; L-histidine from 5-phospho-alpha-D-ribose 1-diphosphate: step 1/9. In terms of biological role, required for the first step of histidine biosynthesis. May allow the feedback regulation of ATP phosphoribosyltransferase activity by histidine. The chain is ATP phosphoribosyltransferase regulatory subunit from Burkholderia cenocepacia (strain ATCC BAA-245 / DSM 16553 / LMG 16656 / NCTC 13227 / J2315 / CF5610) (Burkholderia cepacia (strain J2315)).